Here is a 354-residue protein sequence, read N- to C-terminus: 5,10-methenyltetrahydromethanopterin hydrogenase (354 aa).

The protein belongs to the HMD family.

The enzyme catalyses 5,10-methenyl-5,6,7,8-tetrahydromethanopterin + H2 = 5,10-methylenetetrahydromethanopterin + H(+). It functions in the pathway one-carbon metabolism; methanogenesis from CO(2); 5,10-methylene-5,6,7,8-tetrahydromethanopterin from 5,10-methenyl-5,6,7,8-tetrahydromethanopterin (hydrogen route): step 1/1. Catalyzes the reversible reduction of methenyl-H(4)MPT(+) to methylene-H(4)MPT. This Methanococcus maripaludis (strain C7 / ATCC BAA-1331) protein is 5,10-methenyltetrahydromethanopterin hydrogenase.